The primary structure comprises 468 residues: 3-isopropylmalate dehydratase large subunit (468 aa).

Cys347, Cys407, and Cys410 together coordinate [4Fe-4S] cluster. Residues 424-441 (SASSSNRNFKGRQGSPSG) are compositionally biased toward polar residues. Residues 424-443 (SASSSNRNFKGRQGSPSGRT) are disordered.

Belongs to the aconitase/IPM isomerase family. LeuC type 1 subfamily. In terms of assembly, heterodimer of LeuC and LeuD. Requires [4Fe-4S] cluster as cofactor.

The catalysed reaction is (2R,3S)-3-isopropylmalate = (2S)-2-isopropylmalate. The protein operates within amino-acid biosynthesis; L-leucine biosynthesis; L-leucine from 3-methyl-2-oxobutanoate: step 2/4. In terms of biological role, catalyzes the isomerization between 2-isopropylmalate and 3-isopropylmalate, via the formation of 2-isopropylmaleate. The chain is 3-isopropylmalate dehydratase large subunit from Prochlorococcus marinus (strain MIT 9215).